The sequence spans 622 residues: Probable E3 ubiquitin-protein ligase DTX2 (622 aa).

WWE domains lie at 8–97 (SLVQ…AVRR) and 98–174 (HLFP…SVRR). Residues R213, R215, and R233 each carry the asymmetric dimethylarginine modification. K249 carries the post-translational modification N6-acetyllysine. Disordered stretches follow at residues 249–324 (KPSL…VPMQ) and 355–393 (APQP…EPEP). An Omega-N-methylarginine modification is found at R256. Polar residues predominate over residues 274 to 285 (LGSQPLYRSSLS). Low complexity predominate over residues 299 to 322 (SGAVSASLPSGPSSSPGSVPATVP). Phosphoserine is present on S360. Positions 372 to 381 (GSVKRLRKMS) are enriched in basic residues. An RING-type zinc finger spans residues 412–473 (CIICMEKLST…DGSLQCPSCK (62 aa)).

Belongs to the Deltex family. As to quaternary structure, homodimer. May form a heterodimer with other members of the Deltex family. Interacts with NOTCH1.

The protein resides in the cytoplasm. Its subcellular location is the nucleus. It carries out the reaction S-ubiquitinyl-[E2 ubiquitin-conjugating enzyme]-L-cysteine + [acceptor protein]-L-lysine = [E2 ubiquitin-conjugating enzyme]-L-cysteine + N(6)-ubiquitinyl-[acceptor protein]-L-lysine.. Its pathway is protein modification; protein ubiquitination. Functionally, regulator of Notch signaling, a signaling pathway involved in cell-cell communications that regulates a broad spectrum of cell-fate determinations. Probably acts both as a positive and negative regulator of Notch, depending on the developmental and cell context. Mediates the antineural activity of Notch, possibly by inhibiting the transcriptional activation mediated by MATCH1. Functions as a ubiquitin ligase protein in vitro, suggesting that it may regulate the Notch pathway via some ubiquitin ligase activity. This Homo sapiens (Human) protein is Probable E3 ubiquitin-protein ligase DTX2 (DTX2).